The chain runs to 278 residues: UPF0761 membrane protein CBU_1578 (278 aa).

Helical transmembrane passes span 38–58 (LLAL…VPAF), 68–88 (LIWE…LSQL), 92–112 (VTGL…LLMY), 134–154 (FLIY…VMLL), 177–197 (LLFV…NWVL), 207–227 (AVIG…AFTV), and 244–264 (VIPI…LGAV).

This sequence belongs to the UPF0761 family.

The protein localises to the cell inner membrane. In Coxiella burnetii (strain RSA 493 / Nine Mile phase I), this protein is UPF0761 membrane protein CBU_1578.